A 150-amino-acid chain; its full sequence is Large ribosomal subunit protein bL9 (150 aa).

This sequence belongs to the bacterial ribosomal protein bL9 family.

Its function is as follows. Binds to the 23S rRNA. This is Large ribosomal subunit protein bL9 from Burkholderia pseudomallei (strain 668).